Here is a 514-residue protein sequence, read N- to C-terminus: GMP synthase [glutamine-hydrolyzing] (514 aa).

A Glutamine amidotransferase type-1 domain is found at 9-199 (KIIVLDFGSQ…ALNVCGCKGD (191 aa)). The Nucleophile role is filled by Cys-86. Residues His-173 and Glu-175 contribute to the active site. In terms of domain architecture, GMPS ATP-PPase spans 200–389 (WTMENFSEVE…LGMPDAIVWR (190 aa)). 227 to 233 (SGGVDSS) provides a ligand contact to ATP.

Homodimer.

It catalyses the reaction XMP + L-glutamine + ATP + H2O = GMP + L-glutamate + AMP + diphosphate + 2 H(+). Its pathway is purine metabolism; GMP biosynthesis; GMP from XMP (L-Gln route): step 1/1. Functionally, catalyzes the synthesis of GMP from XMP. The sequence is that of GMP synthase [glutamine-hydrolyzing] from Listeria monocytogenes serotype 4b (strain F2365).